A 212-amino-acid chain; its full sequence is uncharacterized protein (212 aa).

The NERD domain maps to 29 to 146 (KGKAGEKLVK…AAFHPKCSLK (118 aa)).

This is an uncharacterized protein from Bacillus anthracis.